A 342-amino-acid chain; its full sequence is Flap endonuclease 1 (342 aa).

The N-domain stretch occupies residues 1–99; that stretch reads MGVKIGELIE…RAIEERVRAR (99 aa). Mg(2+) contacts are provided by Asp-28, Asp-81, Glu-153, Glu-155, Asp-174, Asp-176, and Asp-237. The I-domain stretch occupies residues 117–259; sequence EARKYAQAAL…RALELVKKYK (143 aa).

The protein belongs to the XPG/RAD2 endonuclease family. FEN1 subfamily. As to quaternary structure, interacts with PCNA. PCNA stimulates the nuclease activity without altering cleavage specificity. Requires Mg(2+) as cofactor.

Functionally, structure-specific nuclease with 5'-flap endonuclease and 5'-3' exonuclease activities involved in DNA replication and repair. During DNA replication, cleaves the 5'-overhanging flap structure that is generated by displacement synthesis when DNA polymerase encounters the 5'-end of a downstream Okazaki fragment. Binds the unpaired 3'-DNA end and kinks the DNA to facilitate 5' cleavage specificity. Cleaves one nucleotide into the double-stranded DNA from the junction in flap DNA, leaving a nick for ligation. Also involved in the base excision repair (BER) pathway. Acts as a genome stabilization factor that prevents flaps from equilibrating into structures that lead to duplications and deletions. Also possesses 5'-3' exonuclease activity on nicked or gapped double-stranded DNA. The polypeptide is Flap endonuclease 1 (Korarchaeum cryptofilum (strain OPF8)).